Reading from the N-terminus, the 422-residue chain is UDP-N-acetylglucosamine 1-carboxyvinyltransferase (422 aa).

Residue 22–23 (KN) participates in phosphoenolpyruvate binding. Residue arginine 95 participates in UDP-N-acetyl-alpha-D-glucosamine binding. Cysteine 119 functions as the Proton donor in the catalytic mechanism. Position 119 is a 2-(S-cysteinyl)pyruvic acid O-phosphothioketal (cysteine 119). Residues 124–128 (RPIDQ), aspartate 309, and valine 331 each bind UDP-N-acetyl-alpha-D-glucosamine.

This sequence belongs to the EPSP synthase family. MurA subfamily.

It is found in the cytoplasm. The enzyme catalyses phosphoenolpyruvate + UDP-N-acetyl-alpha-D-glucosamine = UDP-N-acetyl-3-O-(1-carboxyvinyl)-alpha-D-glucosamine + phosphate. It functions in the pathway cell wall biogenesis; peptidoglycan biosynthesis. Functionally, cell wall formation. Adds enolpyruvyl to UDP-N-acetylglucosamine. This chain is UDP-N-acetylglucosamine 1-carboxyvinyltransferase, found in Anaeromyxobacter sp. (strain K).